Reading from the N-terminus, the 99-residue chain is U1-theraphotoxin-Lsp1a (99 aa).

An N-terminal signal peptide occupies residues 1–23; sequence MRSLTLAALLLCSLLLVFHTSAA. The propeptide occupies 24-50; it reads AELEAQEGHLMIPGDTDTALETVDDER. Intrachain disulfides connect C54/C67, C58/C91, C72/C74, and C85/C96.

It belongs to the neurotoxin 12 (Hwtx-2) family. 04 (lasiotoxin) subfamily. As to expression, expressed by the venom gland.

The protein resides in the secreted. In terms of biological role, toxin that causes irreversible contractile paralysis into adult Aedes aegypti resulting in 100% mortality after 24 hours. This is U1-theraphotoxin-Lsp1a from Lasiodora sp. (strain IBSP 8539) (Brazilian salmon pink birdeater).